Reading from the N-terminus, the 272-residue chain is Phosphate import ATP-binding protein PstB (272 aa).

Positions 20–267 constitute an ABC transporter domain; sequence VKKEVVYETN…PADQRTADYI (248 aa). 58–65 serves as a coordination point for ATP; that stretch reads GPSGCGKS.

This sequence belongs to the ABC transporter superfamily. Phosphate importer (TC 3.A.1.7) family. As to quaternary structure, the complex is composed of two ATP-binding proteins (PstB), two transmembrane proteins (PstC and PstA) and a solute-binding protein (PstS).

It is found in the cell membrane. The enzyme catalyses phosphate(out) + ATP + H2O = ADP + 2 phosphate(in) + H(+). Functionally, part of the ABC transporter complex PstSACB involved in phosphate import. Responsible for energy coupling to the transport system. In Geobacillus kaustophilus (strain HTA426), this protein is Phosphate import ATP-binding protein PstB.